The chain runs to 860 residues: DNA mismatch repair protein MutS (860 aa).

618 to 625 (GPNMGGKS) serves as a coordination point for ATP.

Belongs to the DNA mismatch repair MutS family.

This protein is involved in the repair of mismatches in DNA. It is possible that it carries out the mismatch recognition step. This protein has a weak ATPase activity. In Shewanella piezotolerans (strain WP3 / JCM 13877), this protein is DNA mismatch repair protein MutS.